Here is a 956-residue protein sequence, read N- to C-terminus: F-box only protein 10 (956 aa).

The region spanning 1–48 (MEAGGLPLELWRMILAYLHLPDLGRCSLVCRAWYELILSLDSTRWRQL) is the F-box domain. 2 PbH1 repeats span residues 198–217 (SGHVQFDNCNFENGHIQVHG) and 238–260 (VPLCVLENCEFVGSENNSVTVEG). The interval 314 to 367 (EGSQSPTSPASSSPKPGSKAGSQEAEVGSDGERVAQTPDSSDGGLSPSGEDEDE) is disordered. Composition is skewed to low complexity over residues 316–336 (SQSPTSPASSSPKPGSKAGSQ) and 351–361 (PDSSDGGLSPS). Ser-321 and Ser-326 each carry phosphoserine. PbH1 repeat units lie at residues 427-448 (VQGCLIRKCLFRDGKGGVFVCS), 449-470 (HGRAKMEGNIFRNLTYAVRCIH), 471-493 (NSKIIMLRNDIYRCRASGIFLRL), 494-516 (EGGGLIAGNNIYHNAEAGVDIRK), 538-560 (LGNGKGIIRNNQIFSNKEAGIYI), 561-583 (LYHGNPVVSGNHIFKGRAAGIAV), 584-606 (NENGKGLITENVIRENQWGGVDI), 607-629 (RRGGIPVLRSNLICFGYSDGVVV), 630-652 (GDEGKGLIEGNTIYANKGCGVWM), 653-675 (MSSSLPHVTSNHVSYNGLYGVAV), 717-739 (RPITIALVESNSINHNGASGLYV), 740-762 (QSSEALHVITNVIHANGDRGITV), 764-786 (QSSQPTRVANNSISCNRQSGVKV), 787-809 (EAQCKVELRGNGIYDNRGHGIIT), and 832-854 (LPRSDTKVIKNRIHSFRAYGIAV).

As to quaternary structure, component of the SCF(FBXO10) complex consisting of CUL1, SKP1 and FBXO10. Interacts with BCL2. Interacts with PRDM1.

The protein resides in the cytoplasm. It functions in the pathway protein modification; protein ubiquitination. Its function is as follows. Substrate-recognition component of the SCF (SKP1-CUL1-F-box protein)-type E3 ubiquitin ligase complex. Mediates the ubiquitination and degradation of BCL2, an antiapoptotic protein, thereby playing a role in apoptosis by controlling the stability of BCL2. Targets also the receptor for advanced glycation end products RAGE for ubiquitination and subsequent lysosomal degradation. Directly controls HGAL/GCSAM ubiquitination and degradation and thereby decreases BCR signaling. The sequence is that of F-box only protein 10 (FBXO10) from Homo sapiens (Human).